A 361-amino-acid polypeptide reads, in one-letter code: Mitogen-activated protein kinase 14 (361 aa).

Residues 32-316 (YVPIKPIGRG…VSDALLHPYM (285 aa)) enclose the Protein kinase domain. ATP is bound by residues 38-46 (IGRGAYGVV) and Lys-61. Residue Asp-158 is the Proton acceptor of the active site. Phosphothreonine is present on Thr-188. The short motif at 188 to 190 (TEY) is the TXY element. Residue Tyr-190 is modified to Phosphotyrosine. Thr-193 carries the phosphothreonine modification.

This sequence belongs to the protein kinase superfamily. CMGC Ser/Thr protein kinase family. MAP kinase subfamily. As to quaternary structure, interacts with MKK3. Dually phosphorylated on Thr-188 and Tyr-190, which activates the enzyme.

It carries out the reaction L-seryl-[protein] + ATP = O-phospho-L-seryl-[protein] + ADP + H(+). It catalyses the reaction L-threonyl-[protein] + ATP = O-phospho-L-threonyl-[protein] + ADP + H(+). With respect to regulation, activated by threonine and tyrosine phosphorylation. The sequence is that of Mitogen-activated protein kinase 14 (MPK14) from Arabidopsis thaliana (Mouse-ear cress).